The following is a 417-amino-acid chain: UPF0761 membrane protein Daci_4966 (417 aa).

The next 6 membrane-spanning stretches (helical) occupy residues 49-69, 106-126, 146-166, 187-207, 235-255, and 256-276; these read VLALVPFFTVALALFTAFPIF, QLGMAGFSILVITAVALILTI, VLIYWAAITLGPLVLGLSLVL, FIFDSIEYLALAAGMAGLYHY, ALGLYLASVPTYSVIYGTFAT, and LPILLIWIYMAWIIVLLGAVV.

It belongs to the UPF0761 family.

It localises to the cell inner membrane. This is UPF0761 membrane protein Daci_4966 from Delftia acidovorans (strain DSM 14801 / SPH-1).